A 206-amino-acid polypeptide reads, in one-letter code: Ras-related protein Rab7 (206 aa).

GTP-binding positions include 15-22, 63-67, and 125-128; these read GDSGVGKT, DTAGQ, and NKID. S-geranylgeranyl cysteine attachment occurs at residues Cys-204 and Cys-206. Residue Cys-206 is modified to Cysteine methyl ester.

The protein belongs to the small GTPase superfamily. Rab family.

Its subcellular location is the cell membrane. In terms of biological role, protein transport. Probably involved in vesicular traffic. The chain is Ras-related protein Rab7 from Glycine max (Soybean).